The chain runs to 146 residues: Protein archease (146 aa).

Ca(2+)-binding residues include Asp-16, Asp-145, and Ile-146.

Belongs to the archease family.

Activates the tRNA-splicing ligase complex by facilitating the enzymatic turnover of catalytic subunit RtcB. Acts by promoting the guanylylation of RtcB, a key intermediate step in tRNA ligation. Can also alter the NTP specificity of RtcB such that ATP, dGTP or ITP is used efficiently. The polypeptide is Protein archease (Methanosarcina acetivorans (strain ATCC 35395 / DSM 2834 / JCM 12185 / C2A)).